A 426-amino-acid polypeptide reads, in one-letter code: UPF0164 protein TP_0548 (426 aa).

Positions 1–37 are cleaved as a signal peptide; sequence MISCSVRRRPRWEPQVGAAFLAFALLPVLASGRGMQA.

Belongs to the UPF0164 family.

The protein is UPF0164 protein TP_0548 of Treponema pallidum (strain Nichols).